Consider the following 126-residue polypeptide: Glycine cleavage system H protein (126 aa).

The Lipoyl-binding domain occupies 24 to 106 (TITVGITDHA…YGEGWFFRMK (83 aa)). K65 carries the N6-lipoyllysine modification.

It belongs to the GcvH family. The glycine cleavage system is composed of four proteins: P, T, L and H. It depends on (R)-lipoate as a cofactor.

The glycine cleavage system catalyzes the degradation of glycine. The H protein shuttles the methylamine group of glycine from the P protein to the T protein. This is Glycine cleavage system H protein from Psychrobacter arcticus (strain DSM 17307 / VKM B-2377 / 273-4).